The primary structure comprises 99 residues: MSKFVIWTSELDSRLSKKYGRVVPRNLAVERPSIEEIEEAAKSLGFKVLQVEREKLNPKLSGIDEDLRTYGRIIIESPYGKAKTLKIIAQKIRELRRRR.

This sequence belongs to the SRP19 family. As to quaternary structure, part of the signal recognition particle protein translocation system, which is composed of SRP and FtsY. Archaeal SRP consists of a 7S RNA molecule of 300 nucleotides and two protein subunits: SRP54 and SRP19.

It localises to the cytoplasm. Involved in targeting and insertion of nascent membrane proteins into the cytoplasmic membrane. Binds directly to 7S RNA and mediates binding of the 54 kDa subunit of the SRP. This Pyrococcus abyssi (strain GE5 / Orsay) protein is Signal recognition particle 19 kDa protein.